The sequence spans 225 residues: Cbp/p300-interacting transactivator 2 (225 aa).

It belongs to the CITED family.

The protein resides in the nucleus. Functionally, transcriptional coactivator or corepressor of the p300/CBP-mediated transcription complex. May be involved in sex determination, early gonad development, left-right patterning during embryogenesis and differentiation of the adrenal cortex. In Xenopus tropicalis (Western clawed frog), this protein is Cbp/p300-interacting transactivator 2 (cited2).